The primary structure comprises 347 residues: Quinolinate synthase (347 aa).

Histidine 47 and serine 68 together coordinate iminosuccinate. Cysteine 113 lines the [4Fe-4S] cluster pocket. Iminosuccinate contacts are provided by residues 139 to 141 (YAN) and serine 156. Cysteine 200 serves as a coordination point for [4Fe-4S] cluster. Residues 226–228 (HPE) and threonine 243 contribute to the iminosuccinate site. Cysteine 297 is a [4Fe-4S] cluster binding site.

It belongs to the quinolinate synthase family. Type 1 subfamily. [4Fe-4S] cluster is required as a cofactor.

The protein resides in the cytoplasm. The catalysed reaction is iminosuccinate + dihydroxyacetone phosphate = quinolinate + phosphate + 2 H2O + H(+). It participates in cofactor biosynthesis; NAD(+) biosynthesis; quinolinate from iminoaspartate: step 1/1. In terms of biological role, catalyzes the condensation of iminoaspartate with dihydroxyacetone phosphate to form quinolinate. The chain is Quinolinate synthase from Enterobacter sp. (strain 638).